We begin with the raw amino-acid sequence, 130 residues long: Small ribosomal subunit protein uS9 (130 aa).

This sequence belongs to the universal ribosomal protein uS9 family.

This Nitrosospira multiformis (strain ATCC 25196 / NCIMB 11849 / C 71) protein is Small ribosomal subunit protein uS9.